We begin with the raw amino-acid sequence, 143 residues long: Large ribosomal subunit protein eL28z (143 aa).

Belongs to the eukaryotic ribosomal protein eL28 family. In terms of assembly, component of the large ribosomal subunit. Expressed in seedlings, roots, stems, leaves, inflorescences and siliques.

The protein resides in the cytoplasm. It is found in the nucleus. Its subcellular location is the nucleolus. The protein localises to the nucleoplasm. Its function is as follows. Component of the large ribosomal subunit. Essential in leaf polarity establishment, probably having a role for translation in leaf dorsoventral patterning to specify leaf adaxial identity. The protein is Large ribosomal subunit protein eL28z of Arabidopsis thaliana (Mouse-ear cress).